A 538-amino-acid polypeptide reads, in one-letter code: NAD(P)H-quinone oxidoreductase chain 4 1 (538 aa).

13 helical membrane passes run 7–27 (FPWL…IPII), 37–57 (WYGL…FWHY), 88–108 (LSMP…FAAW), 116–136 (LFYG…VAQD), 137–157 (LLLF…LISI), 170–190 (FILY…ALAF), 210–230 (AIEL…LPIF), 244–264 (SAPG…YALI), 278–298 (FAPV…CCAF), 315–335 (MGFV…GAVL), 336–356 (QMVS…VTYE), 388–408 (LALP…GIAT), and 418–438 (VVVV…LLSM).

The protein belongs to the complex I subunit 4 family.

The protein resides in the cellular thylakoid membrane. The enzyme catalyses a plastoquinone + NADH + (n+1) H(+)(in) = a plastoquinol + NAD(+) + n H(+)(out). The catalysed reaction is a plastoquinone + NADPH + (n+1) H(+)(in) = a plastoquinol + NADP(+) + n H(+)(out). Functionally, NDH-1 shuttles electrons from NAD(P)H, via FMN and iron-sulfur (Fe-S) centers, to quinones in the respiratory chain. The immediate electron acceptor for the enzyme in this species is believed to be plastoquinone. Couples the redox reaction to proton translocation (for every two electrons transferred, four hydrogen ions are translocated across the cytoplasmic membrane), and thus conserves the redox energy in a proton gradient. The protein is NAD(P)H-quinone oxidoreductase chain 4 1 of Nostoc sp. (strain PCC 7120 / SAG 25.82 / UTEX 2576).